The chain runs to 198 residues: tRNA (pseudouridine(54)-N(1))-methyltransferase (198 aa).

Leucine 128 contacts S-adenosyl-L-methionine.

The protein belongs to the methyltransferase superfamily. TrmY family. As to quaternary structure, homodimer.

The protein resides in the cytoplasm. It catalyses the reaction pseudouridine(54) in tRNA + S-adenosyl-L-methionine = N(1)-methylpseudouridine(54) in tRNA + S-adenosyl-L-homocysteine + H(+). Functionally, specifically catalyzes the N1-methylation of pseudouridine at position 54 (Psi54) in tRNAs. The chain is tRNA (pseudouridine(54)-N(1))-methyltransferase from Haloarcula marismortui (strain ATCC 43049 / DSM 3752 / JCM 8966 / VKM B-1809) (Halobacterium marismortui).